Here is a 166-residue protein sequence, read N- to C-terminus: Cyanate hydratase (166 aa).

Catalysis depends on residues Arg-106, Glu-109, and Ser-132.

This sequence belongs to the cyanase family.

The catalysed reaction is cyanate + hydrogencarbonate + 3 H(+) = NH4(+) + 2 CO2. Its function is as follows. Catalyzes the reaction of cyanate with bicarbonate to produce ammonia and carbon dioxide. The chain is Cyanate hydratase from Verticillium alfalfae (strain VaMs.102 / ATCC MYA-4576 / FGSC 10136) (Verticillium wilt of alfalfa).